The primary structure comprises 354 residues: Methylthioribose-1-phosphate isomerase (354 aa).

Residues 58 to 60 (RGA), arginine 101, and glutamine 204 each bind substrate. Aspartate 245 serves as the catalytic Proton donor. A substrate-binding site is contributed by 255 to 256 (NK).

This sequence belongs to the eIF-2B alpha/beta/delta subunits family. MtnA subfamily.

It catalyses the reaction 5-(methylsulfanyl)-alpha-D-ribose 1-phosphate = 5-(methylsulfanyl)-D-ribulose 1-phosphate. The protein operates within amino-acid biosynthesis; L-methionine biosynthesis via salvage pathway; L-methionine from S-methyl-5-thio-alpha-D-ribose 1-phosphate: step 1/6. In terms of biological role, catalyzes the interconversion of methylthioribose-1-phosphate (MTR-1-P) into methylthioribulose-1-phosphate (MTRu-1-P). This chain is Methylthioribose-1-phosphate isomerase, found in Xanthomonas oryzae pv. oryzae (strain MAFF 311018).